We begin with the raw amino-acid sequence, 445 residues long: Trigger factor (445 aa).

Residues 162–247 enclose the PPIase FKBP-type domain; it reads GDQVTIDAIG…IKAVHTAEPT (86 aa).

The protein belongs to the FKBP-type PPIase family. Tig subfamily.

It localises to the cytoplasm. The catalysed reaction is [protein]-peptidylproline (omega=180) = [protein]-peptidylproline (omega=0). In terms of biological role, involved in protein export. Acts as a chaperone by maintaining the newly synthesized protein in an open conformation. Functions as a peptidyl-prolyl cis-trans isomerase. This Rickettsia akari (strain Hartford) protein is Trigger factor.